The chain runs to 1376 residues: DNA-directed RNA polymerase subunit beta (1376 aa).

It belongs to the RNA polymerase beta chain family. In terms of assembly, the RNAP catalytic core consists of 2 alpha, 1 beta, 1 beta' and 1 omega subunit. When a sigma factor is associated with the core the holoenzyme is formed, which can initiate transcription.

The catalysed reaction is RNA(n) + a ribonucleoside 5'-triphosphate = RNA(n+1) + diphosphate. Functionally, DNA-dependent RNA polymerase catalyzes the transcription of DNA into RNA using the four ribonucleoside triphosphates as substrates. The chain is DNA-directed RNA polymerase subunit beta from Methylorubrum extorquens (strain PA1) (Methylobacterium extorquens).